The primary structure comprises 198 residues: Putative peptidyl-prolyl cis-trans isomerase (198 aa).

The 182-residue stretch at 14–195 (NEIKVAMHTN…HDVVIESIDV (182 aa)) folds into the PPIase cyclophilin-type domain.

The protein belongs to the cyclophilin-type PPIase family.

The catalysed reaction is [protein]-peptidylproline (omega=180) = [protein]-peptidylproline (omega=0). Its function is as follows. PPIases accelerate the folding of proteins. It catalyzes the cis-trans isomerization of proline imidic peptide bonds in oligopeptides. The chain is Putative peptidyl-prolyl cis-trans isomerase from Staphylococcus haemolyticus (strain JCSC1435).